An 824-amino-acid chain; its full sequence is AMP deaminase 2 (824 aa).

Residues 1-43 (MASYPGPGKSKAKYPFKKRAGLQASAAAPEARSGLGASPLQSA) form a disordered region. Residues 10–20 (SKAKYPFKKRA) show a composition bias toward basic residues. The residue at position 44 (Arg-44) is an Omega-N-methylarginine. Phosphoserine is present on residues Ser-45, Ser-63, and Ser-79. Tyr-90 carries the phosphotyrosine modification. A phosphoserine mark is found at Ser-96 and Ser-113. The residue at position 133 (Thr-133) is a Phosphothreonine. A phosphoserine mark is found at Ser-135 and Ser-137. The Zn(2+) site is built by His-364 and His-366. Residues His-366 and 435-440 (KFNAKY) each bind substrate. His-633 contributes to the Zn(2+) binding site. Glu-636 contacts substrate. His-655 acts as the Proton acceptor in catalysis. A Zn(2+)-binding site is contributed by Asp-710. A substrate-binding site is contributed by 711–714 (DPLQ).

Belongs to the metallo-dependent hydrolases superfamily. Adenosine and AMP deaminases family. As to quaternary structure, homotetramer. It depends on Zn(2+) as a cofactor.

It carries out the reaction AMP + H2O + H(+) = IMP + NH4(+). The protein operates within purine metabolism; IMP biosynthesis via salvage pathway; IMP from AMP: step 1/1. In terms of biological role, AMP deaminase plays a critical role in energy metabolism. Catalyzes the deamination of AMP to IMP and plays an important role in the purine nucleotide cycle. In Mus musculus (Mouse), this protein is AMP deaminase 2.